Here is a 330-residue protein sequence, read N- to C-terminus: Aquaporin Lacbi1:307192 (330 aa).

The Cytoplasmic portion of the chain corresponds to 1–40 (MSATPIIHLRDVKKRTGVLNAWERVRNKPQVHWAMECFAE). Residues 41-61 (ALGVFFYVYFGLGSTAAWVIG) traverse the membrane as a helical segment. Residues 62 to 71 (NILKQSGLSS) are Extracellular-facing. Residues 72–92 (VFQIGFAYAFGILFAIGVCAA) traverse the membrane as a helical segment. The Cytoplasmic portion of the chain corresponds to 93 to 124 (TSGGHFNPCVTIAFTIFRGFPPLKAVRYIVAQ). Residues 99 to 101 (NPC) carry the NPA 1 motif. A helical membrane pass occupies residues 125–145 (ILGAYIASALVYNQWKVLIVE). Residues 146–157 (SELLLKQAGVYE) lie on the Extracellular side of the membrane. Residues 158–178 (TTMFTPNGPAGIFALYLLPGA) traverse the membrane as a helical segment. The Cytoplasmic portion of the chain corresponds to 179–183 (QTLPR). The chain crosses the membrane as a helical span at residues 184 to 204 (AFLNEFVNCFVLALVIWAALD). Residues 205–207 (PTS) lie on the Extracellular side of the membrane. Residues 208–228 (FMIPPVMAPFIIAAAYAGSIW) form a helical membrane-spanning segment. Topologically, residues 229-264 (GYAVPAISLNSARDIGCRLFALTIWGKSAAGGSYSA) are cytoplasmic. The NPA 2 signature appears at 238-240 (NSA). Residues 265 to 285 (ITALVNIPATLLAAVVYELFL) traverse the membrane as a helical segment. The Extracellular portion of the chain corresponds to 286-330 (VDSDRVVAGSHLEFMNVAANHRRHRHQAEDDNHGDADDSSQEKPV). Residues 308–330 (RHRHQAEDDNHGDADDSSQEKPV) form a disordered region. The span at 312-330 (QAEDDNHGDADDSSQEKPV) shows a compositional bias: basic and acidic residues.

This sequence belongs to the MIP/aquaporin (TC 1.A.8) family.

The protein localises to the membrane. In terms of biological role, water channel-like protein that does not show transport of water nor ammonium across membranes. The polypeptide is Aquaporin Lacbi1:307192 (Laccaria bicolor (strain S238N-H82 / ATCC MYA-4686) (Bicoloured deceiver)).